The chain runs to 346 residues: Phosphoribosylformylglycinamidine cyclo-ligase (346 aa).

The protein belongs to the AIR synthase family.

The protein resides in the cytoplasm. It catalyses the reaction 2-formamido-N(1)-(5-O-phospho-beta-D-ribosyl)acetamidine + ATP = 5-amino-1-(5-phospho-beta-D-ribosyl)imidazole + ADP + phosphate + H(+). It participates in purine metabolism; IMP biosynthesis via de novo pathway; 5-amino-1-(5-phospho-D-ribosyl)imidazole from N(2)-formyl-N(1)-(5-phospho-D-ribosyl)glycinamide: step 2/2. This is Phosphoribosylformylglycinamidine cyclo-ligase from Alteromonas mediterranea (strain DSM 17117 / CIP 110805 / LMG 28347 / Deep ecotype).